The sequence spans 146 residues: Arginine repressor (146 aa).

The protein belongs to the ArgR family.

The protein resides in the cytoplasm. It participates in amino-acid biosynthesis; L-arginine biosynthesis [regulation]. Functionally, regulates arginine biosynthesis genes. This Parabacteroides distasonis (strain ATCC 8503 / DSM 20701 / CIP 104284 / JCM 5825 / NCTC 11152) protein is Arginine repressor.